Reading from the N-terminus, the 190-residue chain is Xanthine phosphoribosyltransferase (190 aa).

Positions 20 and 27 each coordinate xanthine. A128–A132 provides a ligand contact to 5-phospho-alpha-D-ribose 1-diphosphate. K156 is a xanthine binding site.

Belongs to the purine/pyrimidine phosphoribosyltransferase family. Xpt subfamily. As to quaternary structure, homodimer.

It is found in the cytoplasm. It catalyses the reaction XMP + diphosphate = xanthine + 5-phospho-alpha-D-ribose 1-diphosphate. Its pathway is purine metabolism; XMP biosynthesis via salvage pathway; XMP from xanthine: step 1/1. Its function is as follows. Converts the preformed base xanthine, a product of nucleic acid breakdown, to xanthosine 5'-monophosphate (XMP), so it can be reused for RNA or DNA synthesis. In Pseudomonas aeruginosa (strain LESB58), this protein is Xanthine phosphoribosyltransferase.